A 114-amino-acid polypeptide reads, in one-letter code: Gas vesicle protein J1 (114 aa).

The alpha helix 1 stretch occupies residues 13 to 22; sequence LAEMLEMLLD. Beta-strand regions lie at residues 25–35 and 40–50; these read VVVNADIAVSV and LLGIELRAAIA. Positions 46-50 match the Conserved in GvpM1/2 but not GvpA motif; it reads RAAIA. Alpha helix regions lie at residues 52-72, 78-87, and 95-105; these read FETA…ERVE, SPDQSDPASE, and TNPLSDDSTPT. A disordered region spans residues 63 to 114; it reads PTGTDMERVESAANISPDQSDPASETQSETESTNPLSDDSTPTASTSAEETK. Positions 75–98 are enriched in polar residues; the sequence is ANISPDQSDPASETQSETESTNPL. Residues 99 to 114 are compositionally biased toward low complexity; sequence SDDSTPTASTSAEETK.

Belongs to the gas vesicle GvpA family. GvpF to GvpM interact with each other in vitro, and may form multi-subunit complex(es). Interacts with GvpA1.

Its subcellular location is the gas vesicle. Functionally, proteins GvpF to GvpM might be involved in nucleating gas vesicle formation. Mutagenesis of residues 13-61 shows that almost none of them can be substituted and still make gas vesicles. A minor component of the gas vesicle. Gas vesicles are hollow, gas filled proteinaceous nanostructures found in several microbial planktonic microorganisms. They allow positioning of halobacteria at the optimal depth for growth in the poorly aerated, shallow brine pools of their habitat. Expression of a 9.5 kb p-vac DNA fragment containing 2 divergently transcribed regions (gvpD-gvpE-gvpF-gvpG-gvpH-gvpI-gvpJ-gvpK-gvpL-gvpM and gvpA-gvpC-gvpN-gvpO) allows H.volcanii to produce gas vesicles. All site-directed mutagenesis is tested in H.volcanii. A minimal gas vesicle can be made in H.volcanii by gvpA1-gvpO1 plus gvpF1-gvpG1-gvpJ1-gvpK1-gvpL1-gvpM1; lack of enough GvpJ1 prevents formation. A similar region restores gas vesicle production in H.halobium without the p-vac locus, but it still has the c-vac locus. In Halobacterium salinarum (strain ATCC 700922 / JCM 11081 / NRC-1) (Halobacterium halobium), this protein is Gas vesicle protein J1 (gvpJ11).